The primary structure comprises 643 residues: RNA-binding protein RO60 (643 aa).

Positions 63 to 473 constitute a TROVE domain; it reads VENNAGGFVF…AFVNAPPTGK (411 aa). The RNA-binding stretch occupies residues 186–390; sequence RTPTHLFEFV…SMPMTAMIRN (205 aa). Residues 465-643 are VWFA-like domain; the sequence is FVNAPPTGKR…IVHEFVTGKI (179 aa). Residues S482, S484, and T549 each coordinate a divalent metal cation.

It belongs to the Ro 60 kDa family.

Its subcellular location is the cytoplasm. In terms of biological role, RNA-binding protein that binds to misfolded non-coding RNAs, pre-5S rRNA, and several small cytoplasmic RNA molecules known as Y RNAs. This is RNA-binding protein RO60 from Caenorhabditis elegans.